Reading from the N-terminus, the 377-residue chain is NIF3-like protein 1 (377 aa).

Lys109 bears the N6-acetyllysine mark. Positions Leu244–Ile377 are mediates interaction with COPS2. Thr255 bears the Phosphothreonine mark. At Ser259 the chain carries Phosphoserine.

It belongs to the GTP cyclohydrolase I type 2/NIF3 family. In terms of assembly, homodimer. Interacts with COPS2. Interacts with THOC7.

Its subcellular location is the cytoplasm. The protein resides in the nucleus. Functionally, may function as a transcriptional corepressor through its interaction with COPS2, negatively regulating the expression of genes involved in neuronal differentiation. This chain is NIF3-like protein 1, found in Bos taurus (Bovine).